The primary structure comprises 128 residues: Large ribosomal subunit protein bL12 (128 aa).

The protein belongs to the bacterial ribosomal protein bL12 family. As to quaternary structure, homodimer. Part of the ribosomal stalk of the 50S ribosomal subunit. Forms a multimeric L10(L12)X complex, where L10 forms an elongated spine to which 2 to 4 L12 dimers bind in a sequential fashion. Binds GTP-bound translation factors.

Functionally, forms part of the ribosomal stalk which helps the ribosome interact with GTP-bound translation factors. Is thus essential for accurate translation. This Desulfovibrio desulfuricans (strain ATCC 27774 / DSM 6949 / MB) protein is Large ribosomal subunit protein bL12.